The chain runs to 948 residues: Insulin receptor substrate 1 (948 aa).

The PH domain occupies 8-109; the sequence is GMALSGYLKK…WLDKLLVLQR (102 aa). The region spanning 122–236 is the IRS-type PTB domain; it reads YDQVWQVVIQ…SAMSAKTESN (115 aa). The segment at 247 to 270 is disordered; it reads PDLSHEPMRKRSSSANEASKPINV. Residues serine 286 and serine 287 each carry the phosphoserine modification. Polar residues predominate over residues 304–329; sequence RNGTLSESSNQTYFGSNHGLRSNTIS. A disordered region spans residues 304–373; that stretch reads RNGTLSESSN…SDDNGSFSHY (70 aa). Serine 342 is modified (phosphoserine). At tyrosine 410 the chain carries Phosphotyrosine; by INSR. Residues 410 to 413 carry the YXXM motif 1 motif; that stretch reads YIPM. The disordered stretch occupies residues 528–559; the sequence is ANRSQSSITKEGTSYSTSSNRQKKSTSAPLLS. A compositionally biased stretch (polar residues) spans 529-556; the sequence is NRSQSSITKEGTSYSTSSNRQKKSTSAP. Position 554 is a phosphoserine (serine 554). The YXXM motif 2 motif lies at 640 to 643; sequence YLEM. The interval 703-734 is disordered; sequence EKKSNSPLNETPCSLKPTDVESNSHDEHSTNN. The segment covering 720–731 has biased composition (basic and acidic residues); the sequence is TDVESNSHDEHS. Tyrosine 891 bears the Phosphotyrosine; by INSR mark. The segment at 907–948 is disordered; sequence YLKRGSRESPPVSACPGDGNTYAKIDFDQSDSSSSSSNIFNT. Residues serine 912 and serine 915 each carry the phosphoserine modification. Tyrosine 928 bears the Phosphotyrosine; by INSR mark. Low complexity predominate over residues 936–948; it reads SDSSSSSSNIFNT.

Bindings to phosphatidylinositol 3-kinase and SHP2.

In terms of biological role, activates phosphatidylinositol 3-kinase when bound to the regulatory p85 subunit. May mediate the control of various cellular processes by insulin-like peptides. When phosphorylated by the insulin receptor binds specifically to various cellular proteins containing SH2 domains. Involved in control of cell proliferation, cell size, and body and organ growth throughout development. Also has a role in a signaling pathway controlling the physiological response required to endure periods of low nutrient conditions. Insulin/insulin-like growth factor (IGF) signaling pathway has a role in regulating aging and is necessary in the ovary for vitellogenic maturation. The polypeptide is Insulin receptor substrate 1 (Drosophila erecta (Fruit fly)).